We begin with the raw amino-acid sequence, 355 residues long: D-alanine--D-alanine ligase (355 aa).

In terms of domain architecture, ATP-grasp spans 143 to 350; the sequence is KIIFSNLKIP…IEQLVAKLVD (208 aa). Residue 178-233 coordinates ATP; the sequence is LKKLNFPVFVKPSNSGSSLGISKVINKSEIIPALEKARGIDPSILIEEGLEVREIE. D303, E317, and N319 together coordinate Mg(2+).

Belongs to the D-alanine--D-alanine ligase family. Mg(2+) serves as cofactor. It depends on Mn(2+) as a cofactor.

Its subcellular location is the cytoplasm. It catalyses the reaction 2 D-alanine + ATP = D-alanyl-D-alanine + ADP + phosphate + H(+). It functions in the pathway cell wall biogenesis; peptidoglycan biosynthesis. Cell wall formation. The sequence is that of D-alanine--D-alanine ligase from Prochlorococcus marinus (strain AS9601).